We begin with the raw amino-acid sequence, 484 residues long: Pre-glycoprotein polyprotein GP complex (484 aa).

The N-myristoyl glycine; by host moiety is linked to residue Gly-2. Residues 2 to 17 (GQLVSFFQEIPNIIQE) lie on the Extracellular side of the membrane. A helical transmembrane segment spans residues 18–33 (AINIALIAVSLIAILK). Residues 34–58 (GLVNLWKSGLFQLLVFLILAGRSCS) lie on the Cytoplasmic side of the membrane. Cys-57 serves as a coordination point for Zn(2+). The Extracellular portion of the chain corresponds to 59 to 423 (FKIGRSTELQ…QGKTPITLVD (365 aa)). Disulfide bonds link Cys-85-Cys-225, Cys-270-Cys-283, Cys-292-Cys-301, and Cys-355-Cys-376. Residues Asn-88, Asn-125, Asn-178, and Asn-218 are each glycosylated (N-linked (GlcNAc...) asparagine; by host). 4 N-linked (GlcNAc...) asparagine; by host glycosylation sites follow: Asn-356, Asn-364, Asn-381, and Asn-386. A helical membrane pass occupies residues 424–444 (ICFWSTLFFTTTLFLHLVGFP). The Cytoplasmic segment spans residues 445 to 484 (THRHIQGEPCPLPHKLNSNGGCRCGRYPELKKPTTWHRKH). Residues His-446, His-448, Cys-454, His-458, Cys-466, Cys-468, and His-484 each contribute to the Zn(2+) site.

This sequence belongs to the arenaviridae GPC protein family. As to quaternary structure, interacts with glycoprotein G2. Part of the GP complex (GP-C) together with glycoprotein G1 and glycoprotein G2. The GP-complex interacts with protein Z, which interacts with ribonucleocapsid; these interactions may induce virion budding. In terms of assembly, homotrimer; disulfide-linked. In pre-fusion state, G1 homotrimers bind G2 homotrimers via ionic interactions. Part of the GP complex (GP-C) together with glycoprotein G2 and the stable signal peptide. The GP-complex interacts with protein Z, which interacts with ribonucleocapsid; these interactions may induce virion budding. Homotrimer. Interacts with the stable signal peptide. In pre-fusion state, G2 homotrimers bind G1 homotrimers via ionic interactions. Part of the GP complex (GP-C) together with glycoprotein G1 and the stable signal peptide. Acidification in the endosome triggers rearrangements, which ultimately leads to a 6 helix bundle formed by the two heptad repeat domains (HR1 and HR2) in post-fusion state. The GP-complex interacts with protein Z, which interacts with ribonucleocapsid; these interactions may induce virion budding. In terms of processing, specific enzymatic cleavages in vivo yield mature proteins. GP-C polyprotein is cleaved in the endoplasmic reticulum by the host protease MBTPS1. Only cleaved glycoprotein is incorporated into virions. The SSP remains stably associated with the GP complex following cleavage by signal peptidase and plays crucial roles in the trafficking of GP through the secretory pathway. Post-translationally, myristoylation is necessary for GP2-mediated fusion activity.

The protein localises to the virion membrane. It localises to the host endoplasmic reticulum membrane. Its subcellular location is the host Golgi apparatus membrane. The protein resides in the host cell membrane. Functionally, functions as a cleaved signal peptide that is retained as the third component of the GP complex (GP-C). Helps to stabilize the spike complex in its native conformation. The SSP is required for efficient glycoprotein expression, post-translational maturation cleavage of G1 and G2, glycoprotein transport to the cell surface plasma membrane, formation of infectious virus particles, and acid pH-dependent glycoprotein-mediated cell fusion. In terms of biological role, glycoprotein G1: Forms the virion spikes together with glycoprotein G2. The glycoprotein spike trimers are connected to the underlying matrix. Interacts with the host receptor leading to virus endocytosis. Its function is as follows. Forms the virion spikes together with glycoprotein G1. The glycoprotein spike trimers are connected to the underlying matrix. Class I viral fusion protein that directs fusion of viral and host endosomal membranes, leading to delivery of the nucleocapsid into the cytoplasm. Membrane fusion is mediated by irreversible conformational changes induced by acidification. This is Pre-glycoprotein polyprotein GP complex from Chapare mammarenavirus (isolate Human/Bolivia/810419/2003).